Reading from the N-terminus, the 153-residue chain is NAD(P)H-quinone oxidoreductase subunit N (153 aa).

This sequence belongs to the complex I NdhN subunit family. In terms of assembly, NDH-1 can be composed of about 15 different subunits; different subcomplexes with different compositions have been identified which probably have different functions.

It localises to the cellular thylakoid membrane. The enzyme catalyses a plastoquinone + NADH + (n+1) H(+)(in) = a plastoquinol + NAD(+) + n H(+)(out). It catalyses the reaction a plastoquinone + NADPH + (n+1) H(+)(in) = a plastoquinol + NADP(+) + n H(+)(out). NDH-1 shuttles electrons from an unknown electron donor, via FMN and iron-sulfur (Fe-S) centers, to quinones in the respiratory and/or the photosynthetic chain. The immediate electron acceptor for the enzyme in this species is believed to be plastoquinone. Couples the redox reaction to proton translocation, and thus conserves the redox energy in a proton gradient. Cyanobacterial NDH-1 also plays a role in inorganic carbon-concentration. The sequence is that of NAD(P)H-quinone oxidoreductase subunit N from Prochlorococcus marinus (strain MIT 9313).